Here is a 741-residue protein sequence, read N- to C-terminus: Protein O-mannosyl-transferase TMTC4 (741 aa).

The Cytoplasmic portion of the chain corresponds to 1–10 (MVELDADLDH). Residues 11-31 (IVPSVLPPFWAKLVVGFVSLL) traverse the membrane as a helical segment. At 32–110 (CFARSYDGDF…FHPVGFHVVN (79 aa)) the chain is on the extracellular side. N-linked (GlcNAc...) asparagine glycosylation is present at N77. A helical transmembrane segment spans residues 111-131 (ILLHGSISILMLDVFSVLFGG). Over 132–146 (LQYTGKGQRVHLAPR) the chain is Cytoplasmic. Helical transmembrane passes span 147–166 (ASLL…ECVA) and 167–185 (GVVG…LSFL). The Cytoplasmic segment spans residues 186-198 (GYCQAFKETGNKE). A helical transmembrane segment spans residues 199–219 (GTHSSTFWVLLSIFLGAVAML). The Extracellular portion of the chain corresponds to 220-224 (CKEQG). Residues 225 to 245 (ITVLGLNAVFDILVIGKLDIL) traverse the membrane as a helical segment. Over 246-265 (AAVRKVLHKDKSQENAGMFK) the chain is Cytoplasmic. A helical membrane pass occupies residues 266-286 (NGGLLFRIALLTIGGTSMLYI). Over 287–354 (RWKIMGTGPP…PLIKSVGDWR (68 aa)) the chain is Extracellular. A helical transmembrane segment spans residues 355–375 (VIALAALWLCLIGLIFQALCS). Topologically, residues 376-382 (EDSCKRR) are cytoplasmic. A helical transmembrane segment spans residues 383-403 (ILTLGLGFLVIPFLPASNLFF). The Extracellular portion of the chain corresponds to 404–412 (RVGFVVAER). A helical transmembrane segment spans residues 413–433 (VLYLPSAGYCVLLTFGFGALS). At 434-441 (RHTKKKKP) the chain is on the cytoplasmic side. Residues 442–462 (VAAIILGILLINALRCVIRSG) traverse the membrane as a helical segment. At 463–741 (EWRSEEQLFR…KLEQTQKKDV (279 aa)) the chain is on the extracellular side. TPR repeat units follow at residues 482 to 515 (AKVH…NPKY), 516 to 549 (VHAM…QPDF), 550 to 583 (AAAW…RRKY), 584 to 617 (PDCY…KPEH), 618 to 651 (SLAW…IPND), 652 to 685 (HSLM…NPNV), and 686 to 719 (ASYH…DPVA). A glycan (N-linked (GlcNAc...) asparagine) is linked at N497. N-linked (GlcNAc...) asparagine glycosylation is present at N609. Residue N725 is glycosylated (N-linked (GlcNAc...) asparagine).

Belongs to the TMTC family.

Its subcellular location is the membrane. The protein localises to the endoplasmic reticulum. The enzyme catalyses a di-trans,poly-cis-dolichyl beta-D-mannosyl phosphate + L-seryl-[protein] = 3-O-(alpha-D-mannosyl)-L-seryl-[protein] + a di-trans,poly-cis-dolichyl phosphate + H(+). The catalysed reaction is a di-trans,poly-cis-dolichyl beta-D-mannosyl phosphate + L-threonyl-[protein] = 3-O-(alpha-D-mannosyl)-L-threonyl-[protein] + a di-trans,poly-cis-dolichyl phosphate + H(+). Its pathway is protein modification; protein glycosylation. Transfers mannosyl residues to the hydroxyl group of serine or threonine residues. The 4 members of the TMTC family are O-mannosyl-transferases dedicated primarily to the cadherin superfamily, each member seems to have a distinct role in decorating the cadherin domains with O-linked mannose glycans at specific regions. Also acts as O-mannosyl-transferase on other proteins such as PDIA3. This Mus musculus (Mouse) protein is Protein O-mannosyl-transferase TMTC4.